Reading from the N-terminus, the 288-residue chain is Pyridoxal kinase PdxY (288 aa).

Residues Ser-12 and 47 to 48 contribute to the substrate site; that span reads TQ. ATP is bound by residues Asp-114, Glu-151, Lys-184, and 211-214; that span reads RPLL. Asp-225 is a binding site for substrate.

This sequence belongs to the pyridoxine kinase family. PdxY subfamily. In terms of assembly, homodimer. The cofactor is Mg(2+).

The enzyme catalyses pyridoxal + ATP = pyridoxal 5'-phosphate + ADP + H(+). The protein operates within cofactor metabolism; pyridoxal 5'-phosphate salvage; pyridoxal 5'-phosphate from pyridoxal: step 1/1. Functionally, pyridoxal kinase involved in the salvage pathway of pyridoxal 5'-phosphate (PLP). Catalyzes the phosphorylation of pyridoxal to PLP. The polypeptide is Pyridoxal kinase PdxY (Pseudomonas paraeruginosa (strain DSM 24068 / PA7) (Pseudomonas aeruginosa (strain PA7))).